A 299-amino-acid chain; its full sequence is 33 kDa chaperonin (299 aa).

2 cysteine pairs are disulfide-bonded: cysteine 240-cysteine 242 and cysteine 273-cysteine 276.

The protein belongs to the HSP33 family. In terms of processing, under oxidizing conditions two disulfide bonds are formed involving the reactive cysteines. Under reducing conditions zinc is bound to the reactive cysteines and the protein is inactive.

The protein localises to the cytoplasm. In terms of biological role, redox regulated molecular chaperone. Protects both thermally unfolding and oxidatively damaged proteins from irreversible aggregation. Plays an important role in the bacterial defense system toward oxidative stress. This is 33 kDa chaperonin from Thermosynechococcus vestitus (strain NIES-2133 / IAM M-273 / BP-1).